Reading from the N-terminus, the 525-residue chain is GMP synthase [glutamine-hydrolyzing] (525 aa).

The region spanning Arg-7 to Ser-207 is the Glutamine amidotransferase type-1 domain. The active-site Nucleophile is Cys-84. Catalysis depends on residues His-181 and Glu-183. One can recognise a GMPS ATP-PPase domain in the interval Trp-208–Arg-400. Residue Ser-235–Leu-241 participates in ATP binding.

Homodimer.

The catalysed reaction is XMP + L-glutamine + ATP + H2O = GMP + L-glutamate + AMP + diphosphate + 2 H(+). It functions in the pathway purine metabolism; GMP biosynthesis; GMP from XMP (L-Gln route): step 1/1. Catalyzes the synthesis of GMP from XMP. The polypeptide is GMP synthase [glutamine-hydrolyzing] (Blochmanniella pennsylvanica (strain BPEN)).